The chain runs to 796 residues: Protocadherin beta-3 (796 aa).

An N-terminal signal peptide occupies residues 1–26 (MEAGGERFLRQRQVLLLFVFLGGSLA). Residues 27–690 (GSESRRYSVA…AQADLLTVYL (664 aa)) are Extracellular-facing. 5 consecutive Cadherin domains span residues 35–133 (VAEE…SPVF), 138–242 (MHLK…APEF), 247–347 (YEVA…PPEL), 352–451 (VNSP…APAF), and 456–561 (YTLF…SPFV). N-linked (GlcNAc...) asparagine glycosylation is present at asparagine 169. Asparagine 418 and asparagine 436 each carry an N-linked (GlcNAc...) asparagine glycan. N-linked (GlcNAc...) asparagine glycosylation occurs at asparagine 567. Residues 568–671 (GSAPCTELVP…LVDGFSQPYL (104 aa)) enclose the Cadherin 6 domain. The chain crosses the membrane as a helical span at residues 691 to 711 (VVALASVSSLFLFSVLLFVAV). The Cytoplasmic segment spans residues 712–796 (RLCRRSRAAS…PSFRKSFEFS (85 aa)).

It localises to the cell membrane. Its function is as follows. Potential calcium-dependent cell-adhesion protein. May be involved in the establishment and maintenance of specific neuronal connections in the brain. The protein is Protocadherin beta-3 (PCDHB3) of Homo sapiens (Human).